Here is a 396-residue protein sequence, read N- to C-terminus: NADH-quinone oxidoreductase subunit D 2 (396 aa).

The protein belongs to the complex I 49 kDa subunit family. As to quaternary structure, NDH-1 is composed of 14 different subunits. Subunits NuoB, C, D, E, F, and G constitute the peripheral sector of the complex.

Its subcellular location is the cell inner membrane. The catalysed reaction is a quinone + NADH + 5 H(+)(in) = a quinol + NAD(+) + 4 H(+)(out). NDH-1 shuttles electrons from NADH, via FMN and iron-sulfur (Fe-S) centers, to quinones in the respiratory chain. The immediate electron acceptor for the enzyme in this species is believed to be ubiquinone. Couples the redox reaction to proton translocation (for every two electrons transferred, four hydrogen ions are translocated across the cytoplasmic membrane), and thus conserves the redox energy in a proton gradient. This chain is NADH-quinone oxidoreductase subunit D 2, found in Beijerinckia indica subsp. indica (strain ATCC 9039 / DSM 1715 / NCIMB 8712).